Consider the following 223-residue polypeptide: Type III pantothenate kinase (223 aa).

17 to 24 contributes to the ATP binding site; it reads DIGNTHIH. Residues Y81 and 85 to 88 each bind substrate; that span reads GIDR. D87 acts as the Proton acceptor in catalysis. D102 contacts K(+). An ATP-binding site is contributed by S105. Residue T157 coordinates substrate.

The protein belongs to the type III pantothenate kinase family. In terms of assembly, homodimer. It depends on NH4(+) as a cofactor. The cofactor is K(+).

It localises to the cytoplasm. The catalysed reaction is (R)-pantothenate + ATP = (R)-4'-phosphopantothenate + ADP + H(+). The protein operates within cofactor biosynthesis; coenzyme A biosynthesis; CoA from (R)-pantothenate: step 1/5. In terms of biological role, catalyzes the phosphorylation of pantothenate (Pan), the first step in CoA biosynthesis. The protein is Type III pantothenate kinase of Helicobacter pylori (strain HPAG1).